The primary structure comprises 126 residues: uncharacterized protein (126 aa).

The disordered stretch occupies residues 13 to 45 (VAPKAGREEEQPPPPAGLGCGARGEPGRGPLEH).

Its subcellular location is the cytoplasm. The protein resides in the cytoskeleton. It is found in the cilium basal body. This is an uncharacterized protein from Homo sapiens (Human).